Consider the following 111-residue polypeptide: Cytochrome c oxidase subunit 6A1, mitochondrial (111 aa).

Residues 1-26 (MASAVLSASRVSRPLGRALPGLRRPM) constitute a mitochondrion transit peptide. The Mitochondrial matrix portion of the chain corresponds to 27–36 (SSGAHGEEGS). Residues 37–61 (ARMWKALTYFVALPGVGVSMLNVFL) form a helical membrane-spanning segment. Residues 62-111 (KSRHEEHERPPFVAYPHLRIRTKPFPWGDGNHTLFHNPHVNPLPTGYEDE) lie on the Mitochondrial intermembrane side of the membrane.

The protein belongs to the cytochrome c oxidase subunit 6A family. As to quaternary structure, component of the cytochrome c oxidase (complex IV, CIV), a multisubunit enzyme composed of 14 subunits. The complex is composed of a catalytic core of 3 subunits MT-CO1, MT-CO2 and MT-CO3, encoded in the mitochondrial DNA, and 11 supernumerary subunits COX4I, COX5A, COX5B, COX6A, COX6B, COX6C, COX7A, COX7B, COX7C, COX8 and NDUFA4, which are encoded in the nuclear genome. The complex exists as a monomer or a dimer and forms supercomplexes (SCs) in the inner mitochondrial membrane with NADH-ubiquinone oxidoreductase (complex I, CI) and ubiquinol-cytochrome c oxidoreductase (cytochrome b-c1 complex, complex III, CIII), resulting in different assemblies (supercomplex SCI(1)III(2)IV(1) and megacomplex MCI(2)III(2)IV(2)).

It is found in the mitochondrion inner membrane. It functions in the pathway energy metabolism; oxidative phosphorylation. Functionally, component of the cytochrome c oxidase, the last enzyme in the mitochondrial electron transport chain which drives oxidative phosphorylation. The respiratory chain contains 3 multisubunit complexes succinate dehydrogenase (complex II, CII), ubiquinol-cytochrome c oxidoreductase (cytochrome b-c1 complex, complex III, CIII) and cytochrome c oxidase (complex IV, CIV), that cooperate to transfer electrons derived from NADH and succinate to molecular oxygen, creating an electrochemical gradient over the inner membrane that drives transmembrane transport and the ATP synthase. Cytochrome c oxidase is the component of the respiratory chain that catalyzes the reduction of oxygen to water. Electrons originating from reduced cytochrome c in the intermembrane space (IMS) are transferred via the dinuclear copper A center (CU(A)) of subunit 2 and heme A of subunit 1 to the active site in subunit 1, a binuclear center (BNC) formed by heme A3 and copper B (CU(B)). The BNC reduces molecular oxygen to 2 water molecules unsing 4 electrons from cytochrome c in the IMS and 4 protons from the mitochondrial matrix. This chain is Cytochrome c oxidase subunit 6A1, mitochondrial (Cox6a1), found in Mus musculus (Mouse).